Here is a 108-residue protein sequence, read N- to C-terminus: DNA-binding protein HBbu (108 aa).

It belongs to the bacterial histone-like protein family.

Its function is as follows. Histone-like DNA-binding protein which is capable of wrapping DNA to stabilize it, and thus to prevent its denaturation under extreme environmental conditions. In Borreliella afzelii (Borrelia afzelii), this protein is DNA-binding protein HBbu (hbb).